The following is a 38-amino-acid chain: MQVNDLGFVASILFVLVPTVFLLILYIQTASRQGGKDS.

The chain crosses the membrane as a helical span at residues glycine 7–isoleucine 27.

The protein belongs to the PsbM family. PSII is composed of 1 copy each of membrane proteins PsbA, PsbB, PsbC, PsbD, PsbE, PsbF, PsbH, PsbI, PsbJ, PsbK, PsbL, PsbM, PsbT, PsbX, PsbY, PsbZ, Psb30/Ycf12, peripheral proteins PsbO, CyanoQ (PsbQ), PsbU, PsbV and a large number of cofactors. It forms dimeric complexes.

Its subcellular location is the cellular thylakoid membrane. In terms of biological role, one of the components of the core complex of photosystem II (PSII). PSII is a light-driven water:plastoquinone oxidoreductase that uses light energy to abstract electrons from H(2)O, generating O(2) and a proton gradient subsequently used for ATP formation. It consists of a core antenna complex that captures photons, and an electron transfer chain that converts photonic excitation into a charge separation. This subunit is found at the monomer-monomer interface. This chain is Photosystem II reaction center protein M, found in Nostoc punctiforme (strain ATCC 29133 / PCC 73102).